Reading from the N-terminus, the 470-residue chain is Cyclin-B1-3 (470 aa).

Belongs to the cyclin family. Cyclin AB subfamily.

This is Cyclin-B1-3 (CYCB1-3) from Oryza sativa subsp. japonica (Rice).